The primary structure comprises 140 residues: Nucleoside triphosphatase NudI (140 aa).

The region spanning 1–140 (MRHRTIVCPL…RVTLSLKGLL (140 aa)) is the Nudix hydrolase domain. Positions 38–58 (GVEPGERIEEALRREIREELG) match the Nudix box motif.

This sequence belongs to the Nudix hydrolase family. NudI subfamily. Monomer. Mg(2+) is required as a cofactor.

It carries out the reaction a ribonucleoside 5'-triphosphate + H2O = a ribonucleoside 5'-phosphate + diphosphate + H(+). It catalyses the reaction a 2'-deoxyribonucleoside 5'-triphosphate + H2O = a 2'-deoxyribonucleoside 5'-phosphate + diphosphate + H(+). The catalysed reaction is dUTP + H2O = dUMP + diphosphate + H(+). The enzyme catalyses dTTP + H2O = dTMP + diphosphate + H(+). It carries out the reaction dCTP + H2O = dCMP + diphosphate + H(+). In terms of biological role, catalyzes the hydrolysis of nucleoside triphosphates, with a preference for pyrimidine deoxynucleoside triphosphates (dUTP, dTTP and dCTP). The protein is Nucleoside triphosphatase NudI of Klebsiella pneumoniae subsp. pneumoniae (strain ATCC 700721 / MGH 78578).